The following is a 411-amino-acid chain: E3 ubiquitin-protein ligase PUB23 (411 aa).

One can recognise a U-box domain in the interval 11-86 (EIPPFFLCPI…QSWCTLNASY (76 aa)). 4 ARM repeats span residues 132-173 (ATNK…HLET), 175-203 (ETVL…RGMY), 221-261 (DPMQ…NICP), and 263-306 (GRNR…LLCQ).

In terms of assembly, interacts with RPN12A. In terms of processing, auto-ubiquitinated.

Its subcellular location is the cytoplasm. It catalyses the reaction S-ubiquitinyl-[E2 ubiquitin-conjugating enzyme]-L-cysteine + [acceptor protein]-L-lysine = [E2 ubiquitin-conjugating enzyme]-L-cysteine + N(6)-ubiquitinyl-[acceptor protein]-L-lysine.. It functions in the pathway protein modification; protein ubiquitination. In terms of biological role, E3 ubiquitin-protein ligase that negatively regulates water stress response. May control in coordination with PUB23 a drought signaling pathway by ubiquitinating cytosolic RPN12a. Acts as a negative regulator of the immunity triggered by the pathogen-associated molecular patterns (PAMPs), in association with PUB22 and PUB24. The protein is E3 ubiquitin-protein ligase PUB23 (PUB23) of Arabidopsis thaliana (Mouse-ear cress).